The sequence spans 252 residues: Short-chain dehydrogenase/reductase eriH (252 aa).

Residues Ile16, Asp65, Asn92, Lys125, Tyr158, Lys162, Val191, and Thr193 each contribute to the NADP(+) site. The active-site Proton acceptor is Tyr158. The active-site Proton donor is Tyr158. Residue Lys162 is the Lowers pKa of active site Tyr of the active site.

This sequence belongs to the short-chain dehydrogenases/reductases (SDR) family.

The catalysed reaction is cyathadiol + reduced [NADPH--hemoprotein reductase] + O2 = cyathatriol + oxidized [NADPH--hemoprotein reductase] + H2O + H(+). The enzyme catalyses 11-O-acetylcyathatriol + A = 11-O-acetylcyathin A3 + AH2. It carries out the reaction cyathatriol + A = cyathin A3 + AH2. The protein operates within secondary metabolite biosynthesis. Its function is as follows. Short-chain dehydrogenase/reductase; part of the gene cluster that mediates the biosynthesis of erinacines, cyathane-xylosides that show unique biological activities, including leishmanicidal activity, stimulating activity for nerve growth-factor synthesis, and agonistic activity toward the kappa opioid receptor. Within the pathway, eriH works with eriA to catalyze C-11 hydroxylation of cyathadiol to produce cyathatriol. EriH also catalyzes oxidation of 11-O-acetyl-cyathatriol into 1-O-acetylcyathin A3. In the absence of eriL and eriJ, the SDR eriH is able to convert cyathatriol to cyathin A3; this is likely a switching mechanism in the biosynthesis of cyathins (C-14 ketogroup)and erinacines (C-14 glycosylated group). The first step of the erinacines biosynthesis pathway is catalyzed by the geranylgeranyl diphosphate (GGPP) synthase eriE via conversion of farnesyl pyrophosphate and isopentyl pyrophosphate into geranylgeranyl pyrophosphate (GGPP). GGPP is then substrate of the diterpene cyclase eriG for the production of cyatha-3,12-diene. The cytochrome P450 monooxygenase eriI then hydroxylates cyatha-3,12-diene at C-14 of the seven-membered ring to produce erinacol, which is further hydroxylated at C-15 by the cytochrome P450 monooxygenase eriC to yield cyathadiol. The cytochrome P450 monooxygenase eriA then catalyzes C-11 hydroxylation in the presence of the short chain dehydrogenase/reductase (SDR) eriH, which leads to the production of cyathatriol. The acetyltransferase eriL converts cyathatriol into 11-O-acetyl-cyathatriol. The SDR eriH catalyzes further oxidation of 11-O-acetyl-cyathatriol into 1-O-acetylcyathin A3. Finally, the glycosyl transferase eriJ tranfers xylose from UDP-xylose onto C-14 of 11-O-acetyl-cyathatriol to form eracine Q. EriJ is also able to convert 11-O-acetyl-cyathatriol to eracine Q2 by using UDP-D-glucose as cosubstrate, but at a lower rate. The polypeptide is Short-chain dehydrogenase/reductase eriH (Hericium erinaceus (Lion's mane mushroom)).